We begin with the raw amino-acid sequence, 930 residues long: MRVKDTLNLGKTKFPMRGRLPETEAQREALWEENKVYEQRQKLNEGKPSFVLHDGPPYANGPIHIGHAMNKISKDFIVRYKSMTGYRAPYVPGWDTHGLPIEHQLTKAGYDRKKMSLTEFRDLCQKYALEQVEIQKKGFKRLGVAGEWDHPYLTLAKEFEAAQIKVFGAFAKRGLLYQAKKPVYWSWSSESALAEAEVEYHDVVAKTAFFTEQVQDGKGLLDSDTYLVGWTTTPWTIPASEAVAVSADFEYALVQPSGSDRKYVVAASLLGDLAQKFNWTDYQVVKTFKGAEMEGMTTKHPYIDRELLVGLADYVTDDAGTGLVHTAPGYGDDDYNFGKKYNLPIFAPMNDQGVLTAENGPEFDGVFYQDADDISLRLLEEHDALLLEEDLEHSYPFDWRTKKPIVFRATDQWFVSIDKMRDEILKAVDEVTYYPTWGKVRLRNMLKDRGDWVISRQRVWGVPLPIFYAEDGTPIMTEETINHVSDLFREYGSNVWFDREAKDLLPAGFTSEHSPNGKFTKETDIMDVWFDSGSSHQGVLAERDYLTYPADMYLEGSDQYRGWFNSSLITSVVVSGHAPYKSVLSQGFTLDQSGKKMSKSLGNVIDPNKVVKQMGAEIIRLWVMSADTSADVRVSMETLQQISESYRKLRNTFRFLLANTSDFGPENFVAYEKREAVDQYMTVNFNHFLAGMRDEFDRYDFLNAYKHLINFVNNDLSSFYMNVAKDVLYIEPEDSHVRRSMQATFYEILSGLTKLLTPILPHTTEEVWSYMDEPEDFVQLTEIPEARTFENGNALLEKWEGFMELRSHVLKCLEEARNAKLIGRSLEASADLYLTASQQELLADLGTDAGLLCGVSALSVHDASEAPAEAESFSDNAAVLVQAAKGEVCDRCRMTKEDVGSDPAYQQLCARCAKLVRENFPQTVEEGLEK.

The disordered stretch occupies residues 1 to 21 (MRVKDTLNLGKTKFPMRGRLP). Residues 57–67 (PYANGPIHIGH) carry the 'HIGH' region motif. Glu555 is a binding site for L-isoleucyl-5'-AMP. The 'KMSKS' region signature appears at 596-600 (KMSKS). An ATP-binding site is contributed by Lys599. Zn(2+) is bound by residues Cys889, Cys892, Cys909, and Cys912.

Belongs to the class-I aminoacyl-tRNA synthetase family. IleS type 1 subfamily. As to quaternary structure, monomer. Zn(2+) is required as a cofactor.

The protein resides in the cytoplasm. It carries out the reaction tRNA(Ile) + L-isoleucine + ATP = L-isoleucyl-tRNA(Ile) + AMP + diphosphate. Catalyzes the attachment of isoleucine to tRNA(Ile). As IleRS can inadvertently accommodate and process structurally similar amino acids such as valine, to avoid such errors it has two additional distinct tRNA(Ile)-dependent editing activities. One activity is designated as 'pretransfer' editing and involves the hydrolysis of activated Val-AMP. The other activity is designated 'posttransfer' editing and involves deacylation of mischarged Val-tRNA(Ile). In Limosilactobacillus fermentum (strain NBRC 3956 / LMG 18251) (Lactobacillus fermentum), this protein is Isoleucine--tRNA ligase.